Consider the following 124-residue polypeptide: Holo-[acyl-carrier-protein] synthase (124 aa).

Asp8 and Glu56 together coordinate Mg(2+).

Belongs to the P-Pant transferase superfamily. AcpS family. Mg(2+) is required as a cofactor.

The protein localises to the cytoplasm. The enzyme catalyses apo-[ACP] + CoA = holo-[ACP] + adenosine 3',5'-bisphosphate + H(+). Functionally, transfers the 4'-phosphopantetheine moiety from coenzyme A to a Ser of acyl-carrier-protein. The sequence is that of Holo-[acyl-carrier-protein] synthase from Nitratidesulfovibrio vulgaris (strain ATCC 29579 / DSM 644 / CCUG 34227 / NCIMB 8303 / VKM B-1760 / Hildenborough) (Desulfovibrio vulgaris).